The primary structure comprises 753 residues: Probable tubulin--tyrosine ligase PBY1 (753 aa).

Residues 343-734 enclose the TTL domain; the sequence is MEYIYKPLTH…PIFNENRNKT (392 aa).

This sequence belongs to the tubulin--tyrosine ligase family. It depends on Mg(2+) as a cofactor. K(+) serves as cofactor.

It is found in the cytoplasm. It localises to the P-body. The catalysed reaction is C-terminal L-alpha-aminoacyl-L-glutamyl-L-glutamyl-[tubulin] + L-tyrosine + ATP = C-terminal L-alpha-aminoacyl-L-glutamyl-L-glutamyl-L-tyrosyl-[tubulin] + ADP + phosphate + H(+). In terms of biological role, probable P-body-associated tubulin--tyrosine ligase. This Saccharomyces cerevisiae (strain ATCC 204508 / S288c) (Baker's yeast) protein is Probable tubulin--tyrosine ligase PBY1 (PBY1).